The following is a 196-amino-acid chain: CMRF35-like molecule 2 (196 aa).

An N-terminal signal peptide occupies residues 1-17 (MRLCAGLLLLCFQGCLS). The Ig-like V-type domain maps to 18 to 122 (LTGPGSVSGY…DSWSRDPSVS (105 aa)). Residues 18 to 171 (LTGPGSVSGY…QLWSLLSSIQ (154 aa)) lie on the Extracellular side of the membrane. C36 and C104 are joined by a disulfide. The N-linked (GlcNAc...) asparagine glycan is linked to N84. The chain crosses the membrane as a helical span at residues 172–192 (FQVLVFLKLPLFLSMLCAIFW). Residues 193 to 196 (VNRL) are Cytoplasmic-facing.

This sequence belongs to the CD300 family. Interacts with TYROBP.

The protein localises to the cell membrane. Its function is as follows. Probably acts as an activating receptor. The chain is CMRF35-like molecule 2 (Cd300e) from Mus musculus (Mouse).